A 518-amino-acid chain; its full sequence is Putative transposase for insertion sequence IS408 (518 aa).

The HTH IS408-type domain maps to 11-94 (LKEVLRLKWA…PDYTALHREL (84 aa)). The segment at residues 23–44 (LTHRQISRAIGISVGAVSKFAA) is a DNA-binding region (H-T-H motif). In terms of domain architecture, Integrase catalytic spans 140–335 (QQHRAGEKLF…LPVRRYEIAT (196 aa)). A disordered region spans residues 496 to 518 (LPTTPAEWRSPEHENVRGPDYYH). Positions 504 to 518 (RSPEHENVRGPDYYH) are enriched in basic and acidic residues.

This sequence belongs to the transposase IS21/IS408/IS1162 family.

Its function is as follows. Required for the transposition of the insertion element. The sequence is that of Putative transposase for insertion sequence IS408 from Burkholderia multivorans (strain ATCC 17616 / 249).